The chain runs to 800 residues: DNA topoisomerase 4 subunit A (800 aa).

The 465-residue stretch at 31-495 (LPDVRDGLKP…EIEEIKIDKE (465 aa)) folds into the Topo IIA-type catalytic domain. Tyr119 serves as the catalytic O-(5'-phospho-DNA)-tyrosine intermediate.

It belongs to the type II topoisomerase GyrA/ParC subunit family. ParC type 2 subfamily. As to quaternary structure, heterotetramer composed of ParC and ParE.

It is found in the cell membrane. The catalysed reaction is ATP-dependent breakage, passage and rejoining of double-stranded DNA.. Its function is as follows. Topoisomerase IV is essential for chromosome segregation. It relaxes supercoiled DNA. Performs the decatenation events required during the replication of a circular DNA molecule. The protein is DNA topoisomerase 4 subunit A of Staphylococcus aureus (strain MRSA252).